Reading from the N-terminus, the 783-residue chain is Lon protease (783 aa).

A Lon N-terminal domain is found at 11–203; the sequence is IPVLPLRDVV…FLMGQMESEI (193 aa). 355–362 lines the ATP pocket; that stretch reads GPPGVGKT. Residues 591 to 772 enclose the Lon proteolytic domain; it reads SNRIGQVTGL…DEVLKVALER (182 aa). Catalysis depends on residues Ser678 and Lys721.

This sequence belongs to the peptidase S16 family. Homohexamer. Organized in a ring with a central cavity.

Its subcellular location is the cytoplasm. It carries out the reaction Hydrolysis of proteins in presence of ATP.. Functionally, ATP-dependent serine protease that mediates the selective degradation of mutant and abnormal proteins as well as certain short-lived regulatory proteins. Required for cellular homeostasis and for survival from DNA damage and developmental changes induced by stress. Degrades polypeptides processively to yield small peptide fragments that are 5 to 10 amino acids long. Binds to DNA in a double-stranded, site-specific manner. Regulates swarmer cell differentiation of V.parahaemolyticus. This chain is Lon protease, found in Vibrio parahaemolyticus serotype O3:K6 (strain RIMD 2210633).